The chain runs to 325 residues: Glutarate 2-hydroxylase (325 aa).

Fe cation is bound by residues His160, Asp162, and His292.

This sequence belongs to the glutarate hydroxylase family. As to quaternary structure, homotetramer. Fe(2+) is required as a cofactor.

The enzyme catalyses glutarate + 2-oxoglutarate + O2 = (S)-2-hydroxyglutarate + succinate + CO2. Its pathway is amino-acid degradation. In terms of biological role, acts as an alpha-ketoglutarate-dependent dioxygenase catalyzing hydroxylation of glutarate (GA) to L-2-hydroxyglutarate (L2HG). Functions in a L-lysine degradation pathway that proceeds via cadaverine, glutarate and L-2-hydroxyglutarate. This Escherichia coli (strain UTI89 / UPEC) protein is Glutarate 2-hydroxylase.